Here is a 372-residue protein sequence, read N- to C-terminus: Putative glutamate--cysteine ligase 2 (372 aa).

The protein belongs to the glutamate--cysteine ligase type 2 family. YbdK subfamily.

The enzyme catalyses L-cysteine + L-glutamate + ATP = gamma-L-glutamyl-L-cysteine + ADP + phosphate + H(+). Its function is as follows. ATP-dependent carboxylate-amine ligase which exhibits weak glutamate--cysteine ligase activity. This Rhodopirellula baltica (strain DSM 10527 / NCIMB 13988 / SH1) protein is Putative glutamate--cysteine ligase 2.